Consider the following 452-residue polypeptide: Cell division protein FtsZ (452 aa).

GTP is bound by residues 24–28 (GAGSN), 111–113 (GTG), E142, R146, and D190. The interval 432-452 (DQDNKESDIHDIPAFLRKKRD) is disordered. Basic and acidic residues predominate over residues 433–442 (QDNKESDIHD).

This sequence belongs to the FtsZ family. In terms of assembly, homodimer. Polymerizes to form a dynamic ring structure in a strictly GTP-dependent manner. Interacts directly with several other division proteins.

The protein localises to the cytoplasm. Its function is as follows. Essential cell division protein that forms a contractile ring structure (Z ring) at the future cell division site. The regulation of the ring assembly controls the timing and the location of cell division. One of the functions of the FtsZ ring is to recruit other cell division proteins to the septum to produce a new cell wall between the dividing cells. Binds GTP and shows GTPase activity. The protein is Cell division protein FtsZ of Rickettsia conorii (strain ATCC VR-613 / Malish 7).